Here is a 224-residue protein sequence, read N- to C-terminus: N-terminal Xaa-Pro-Lys N-methyltransferase 1-A (224 aa).

S-adenosyl-L-methionine contacts are provided by residues Gly-70, Arg-75, 92–94 (DVT), 120–121 (LQ), and Gln-136.

The protein belongs to the methyltransferase superfamily. NTM1 family.

It is found in the nucleus. The enzyme catalyses N-terminal L-alanyl-L-prolyl-L-lysyl-[protein] + 3 S-adenosyl-L-methionine = N-terminal N,N,N-trimethyl-L-alanyl-L-prolyl-L-lysyl-[protein] + 3 S-adenosyl-L-homocysteine + 3 H(+). The catalysed reaction is N-terminal L-seryl-L-prolyl-L-lysyl-[protein] + 3 S-adenosyl-L-methionine = N-terminal N,N,N-trimethyl-L-seryl-L-prolyl-L-lysyl-[protein] + 3 S-adenosyl-L-homocysteine + 3 H(+). It catalyses the reaction N-terminal L-prolyl-L-prolyl-L-lysyl-[protein] + 2 S-adenosyl-L-methionine = N-terminal N,N-dimethyl-L-prolyl-L-prolyl-L-lysyl-[protein] + 2 S-adenosyl-L-homocysteine + 2 H(+). Distributive alpha-N-methyltransferase that methylates the N-terminus of target proteins containing the N-terminal motif [Ala/Gly/Pro/Ser]-Pro-Lys when the initiator Met is cleaved. Specifically catalyzes mono-, di- or tri-methylation of the exposed alpha-amino group of the Ala, Gly or Ser residue in the [Ala/Gly/Ser]-Pro-Lys motif and mono- or di-methylation of Pro in the Pro-Pro-Lys motif. Required during mitosis for normal bipolar spindle formation and chromosome segregation via its action on target proteins. This Xenopus laevis (African clawed frog) protein is N-terminal Xaa-Pro-Lys N-methyltransferase 1-A (ntmt1-a).